The sequence spans 287 residues: Protease HtpX (287 aa).

A run of 2 helical transmembrane segments spans residues 4–24 (IFLL…VMSI) and 33–53 (GGLL…SLAI). Position 139 (His139) interacts with Zn(2+). Residue Glu140 is part of the active site. A Zn(2+)-binding site is contributed by His143. Transmembrane regions (helical) follow at residues 154-174 (LIQG…AGII) and 195-215 (AVVF…VAYF). Residue Glu220 participates in Zn(2+) binding.

Belongs to the peptidase M48B family. Zn(2+) serves as cofactor.

It localises to the cell inner membrane. The polypeptide is Protease HtpX (Shewanella oneidensis (strain ATCC 700550 / JCM 31522 / CIP 106686 / LMG 19005 / NCIMB 14063 / MR-1)).